A 336-amino-acid polypeptide reads, in one-letter code: Lipoyl synthase (336 aa).

[4Fe-4S] cluster is bound by residues Cys-81, Cys-86, Cys-92, Cys-107, Cys-111, Cys-114, and Ser-323. In terms of domain architecture, Radical SAM core spans 93–312 (FGHGTATFMI…EDYGYELGFS (220 aa)).

Belongs to the radical SAM superfamily. Lipoyl synthase family. [4Fe-4S] cluster is required as a cofactor.

The protein resides in the cytoplasm. The catalysed reaction is [[Fe-S] cluster scaffold protein carrying a second [4Fe-4S](2+) cluster] + N(6)-octanoyl-L-lysyl-[protein] + 2 oxidized [2Fe-2S]-[ferredoxin] + 2 S-adenosyl-L-methionine + 4 H(+) = [[Fe-S] cluster scaffold protein] + N(6)-[(R)-dihydrolipoyl]-L-lysyl-[protein] + 4 Fe(3+) + 2 hydrogen sulfide + 2 5'-deoxyadenosine + 2 L-methionine + 2 reduced [2Fe-2S]-[ferredoxin]. The protein operates within protein modification; protein lipoylation via endogenous pathway; protein N(6)-(lipoyl)lysine from octanoyl-[acyl-carrier-protein]: step 2/2. Its function is as follows. Catalyzes the radical-mediated insertion of two sulfur atoms into the C-6 and C-8 positions of the octanoyl moiety bound to the lipoyl domains of lipoate-dependent enzymes, thereby converting the octanoylated domains into lipoylated derivatives. The sequence is that of Lipoyl synthase from Stenotrophomonas maltophilia (strain R551-3).